Here is an 85-residue protein sequence, read N- to C-terminus: Sec-independent protein translocase protein TatA (85 aa).

A helical transmembrane segment spans residues 1–21; the sequence is MGSMSIWHWLVVGVLVLLLFG. The disordered stretch occupies residues 39–85; sequence FKKGMSEEDEPTQPAEPRPTPRLQQQPPIEPNADPKLQPMQDDRPQH.

This sequence belongs to the TatA/E family. In terms of assembly, the Tat system comprises two distinct complexes: a TatABC complex, containing multiple copies of TatA, TatB and TatC subunits, and a separate TatA complex, containing only TatA subunits. Substrates initially bind to the TatABC complex, which probably triggers association of the separate TatA complex to form the active translocon.

Its subcellular location is the cell inner membrane. In terms of biological role, part of the twin-arginine translocation (Tat) system that transports large folded proteins containing a characteristic twin-arginine motif in their signal peptide across membranes. TatA could form the protein-conducting channel of the Tat system. The sequence is that of Sec-independent protein translocase protein TatA from Rhizorhabdus wittichii (strain DSM 6014 / CCUG 31198 / JCM 15750 / NBRC 105917 / EY 4224 / RW1) (Sphingomonas wittichii).